The chain runs to 109 residues: Ribonuclease P protein component (109 aa).

It belongs to the RnpA family. Consists of a catalytic RNA component (M1 or rnpB) and a protein subunit.

It catalyses the reaction Endonucleolytic cleavage of RNA, removing 5'-extranucleotides from tRNA precursor.. RNaseP catalyzes the removal of the 5'-leader sequence from pre-tRNA to produce the mature 5'-terminus. It can also cleave other RNA substrates such as 4.5S RNA. The protein component plays an auxiliary but essential role in vivo by binding to the 5'-leader sequence and broadening the substrate specificity of the ribozyme. This chain is Ribonuclease P protein component, found in Streptococcus agalactiae serotype III (strain NEM316).